A 129-amino-acid polypeptide reads, in one-letter code: MVNDCISDLLTRIRNANLVKKEKLIIPNTRVSRNICALLEKEGFIDSCQVNSTEELALQLKYKGRERKPCITNLRRISKPGLRIYASYKNIPKILNGMGVVFVSTSQGLMTDREARYRKLGGEIVCSVW.

The protein belongs to the universal ribosomal protein uS8 family. Part of the 30S ribosomal subunit.

The protein resides in the plastid. It localises to the chloroplast. In terms of biological role, one of the primary rRNA binding proteins, it binds directly to 16S rRNA central domain where it helps coordinate assembly of the platform of the 30S subunit. The protein is Small ribosomal subunit protein uS8c (rps8) of Oltmannsiellopsis viridis (Marine flagellate).